The chain runs to 153 residues: UPF0260 protein YcgN (153 aa).

Belongs to the UPF0260 family.

This is UPF0260 protein YcgN from Shigella boydii serotype 18 (strain CDC 3083-94 / BS512).